The sequence spans 367 residues: MHLPEDLVLEILSKVPAVSLARFRSTCRRWNALVVDGSFAKKHYAYGPRQYPIVIMLIEFRVYLVSIDLHGINNNNGAPSAKLTGQFSLKDPLSNSSEEVDIRNAFHCDGLLLCCTKDRRLVVWNPCSGETKWIQPRNSYKESDLYALGYDNRSSSYKILRMHPVGNPFHIESEVYDFASHSWRSVGVTTDFHIQTNESYGMNVKGTTYWFALSKDWWSSDDRRFLLSFDFSRERFQCLPLPADVKNLHLTVVLSVTREEQQLCMFATLGAGNVYKLDVFVATKTEETTGELTWTKFRRFHSKICINVSADHEKKVLVPHHILLPYYNILHIVGEDIYIRQVNKDGDIGCPILLTYVPSLVQIQQGI.

Positions 1 to 43 (MHLPEDLVLEILSKVPAVSLARFRSTCRRWNALVVDGSFAKKH) constitute an F-box domain.

In Arabidopsis thaliana (Mouse-ear cress), this protein is Putative F-box protein At3g21120.